Here is a 129-residue protein sequence, read N- to C-terminus: Small ribosomal subunit protein uS11 (129 aa).

It belongs to the universal ribosomal protein uS11 family. Part of the 30S ribosomal subunit. Interacts with proteins S7 and S18. Binds to IF-3.

Functionally, located on the platform of the 30S subunit, it bridges several disparate RNA helices of the 16S rRNA. Forms part of the Shine-Dalgarno cleft in the 70S ribosome. The protein is Small ribosomal subunit protein uS11 of Yersinia enterocolitica serotype O:8 / biotype 1B (strain NCTC 13174 / 8081).